The chain runs to 107 residues: Nucleoid-associated protein RF_1365 (107 aa).

Belongs to the YbaB/EbfC family. Homodimer.

The protein resides in the cytoplasm. Its subcellular location is the nucleoid. Its function is as follows. Binds to DNA and alters its conformation. May be involved in regulation of gene expression, nucleoid organization and DNA protection. The chain is Nucleoid-associated protein RF_1365 from Rickettsia felis (strain ATCC VR-1525 / URRWXCal2) (Rickettsia azadi).